Here is a 492-residue protein sequence, read N- to C-terminus: Trigger factor (492 aa).

Positions 164-249 (GDLVVVDFVG…VSDVRVPRKA (86 aa)) constitute a PPIase FKBP-type domain. Positions 440 to 492 (EAEEDSIGKHDHDHDHKEKASDKPKAKKAAAPKKKAAPKKKAAPKAEKKSSDE) are disordered. Residues 445-463 (SIGKHDHDHDHKEKASDKP) show a composition bias toward basic and acidic residues. Basic residues predominate over residues 464 to 482 (KAKKAAAPKKKAAPKKKAA). Basic and acidic residues predominate over residues 483–492 (PKAEKKSSDE).

The protein belongs to the FKBP-type PPIase family. Tig subfamily.

It is found in the cytoplasm. It catalyses the reaction [protein]-peptidylproline (omega=180) = [protein]-peptidylproline (omega=0). In terms of biological role, involved in protein export. Acts as a chaperone by maintaining the newly synthesized protein in an open conformation. Functions as a peptidyl-prolyl cis-trans isomerase. The polypeptide is Trigger factor (Zymomonas mobilis subsp. mobilis (strain ATCC 31821 / ZM4 / CP4)).